The primary structure comprises 858 residues: Neural cell adhesion molecule 1 (858 aa).

An N-terminal signal peptide occupies residues Met1–Ser19. 5 Ig-like C2-type domains span residues Leu20–Asn111, Gln116–Gln205, Pro212–His301, Pro308–Gln413, and Pro416–Glu501. The Extracellular segment spans residues Leu20–Gly718. Intrachain disulfides connect Cys41-Cys96 and Cys139-Cys189. The N-linked (GlcNAc...) asparagine glycan is linked to Asn222. A disulfide bridge connects residues Cys235 and Cys287. N-linked (GlcNAc...) asparagine glycosylation is found at Asn315, Asn347, Asn433, Asn459, and Asn488. Cys329 and Cys395 form a disulfide bridge. The cysteines at positions 436 and 489 are disulfide-linked. Fibronectin type-III domains are found at residues Thr509–Val608 and Glu611–Pro706. The GPI-anchor amidated asparagine moiety is linked to residue Pro706. A helical transmembrane segment spans residues Leu719–Val739. Residues Asp740–Ala858 are Cytoplasmic-facing. The GPI-anchor amidated asparagine moiety is linked to residue Ile741. A disordered region spans residues Gly766–Ala858. Composition is skewed to basic and acidic residues over residues Lys768–Pro809 and Glu817–Thr834. Phosphoserine is present on residues Ser780 and Ser784.

In terms of assembly, (Microbial infection) Interacts with rabies virus glycoprotein. As to quaternary structure, (Microbial infection) Interacts with Zika virus envelope protein E. Interacts with MDK. Found in a complex with SLC39A6, SLC39A10 and with NCAM1; this complex controls NCAM1 phosphorylation and integration into focal adhesion complexes during epithelial-tomesenchymal transition. Interacts with synaptic plasticity regulator PANTS. In terms of processing, polysialylated at Asn-459 and Asn-488 by ST8SIA2 and ST8SIA4. Polysialylation modulates cell interactions by confering both attractive and repulsive properties that are highly regulated by ST8SIA2 and ST8SIA4. Polysialylation is formed on a-2,3-linked sialic acid of core glycans.

The protein localises to the cell membrane. It localises to the secreted. This protein is a cell adhesion molecule involved in neuron-neuron adhesion, neurite fasciculation, outgrowth of neurites, etc. In terms of biological role, (Microbial infection) Acts as a receptor for rabies virus. Its function is as follows. (Microbial infection) Acts as a receptor for Zika virus. The chain is Neural cell adhesion molecule 1 from Homo sapiens (Human).